The primary structure comprises 375 residues: Paralyzed arrest at two-fold protein 6 (375 aa).

Residues 1 to 51 are disordered; sequence MSTLGRSKTPSRDEPKKPGVFEKLSGTLSRKKKAPEDEHGNQGGAHHATDE. The span at 10-20 shows a compositional bias: basic and acidic residues; the sequence is PSRDEPKKPGV. Calponin-homology (CH) domains follow at residues 99 to 206 and 266 to 373; these read AQVV…LHYR and AHVK…TKYK.

It belongs to the parvin family. In terms of assembly, may interact (via calponin-homology (CH) 2 domain) with pat-4 (via kinase domain). May form a complex with unc-112 and pat-4. Component of an integrin containing attachment complex, composed of at least pat-2, pat-3, pat-4, pat-6, unc-52, unc-97 and unc-112. Expressed from 1.5 stage embryos, mostly within the muscle cells. In adult hermaphrodites, expressed in the attachments of other muscles, including the uterine, anal depressor, anal sphincter, and vulval muscles, as well as in the spermatheca and the distal tip cells. Expressed in mechanosensory receptor neurons ALML/R, PLML/R, AVM, and PVM. Localizes at body wall muscle attachments.

Its subcellular location is the cytoplasm. The protein localises to the cytoskeleton. It is found in the myofibril. The protein resides in the sarcomere. It localises to the m line. Its subcellular location is the perikaryon. The protein localises to the cell projection. It is found in the axon. Involved in the regulation of cell adhesion and cytoskeleton organization. Component of an integrin containing attachment complex, which is required for muscle development and maintenance. During embryonic development, required to recruit cpna-1, unc-89 and myofilaments to newly forming integrin attachments composed of integrins pat-2/pat-3, pat-4 and unc-112. Also required to reposition the integrin-based attachments so that they form the highly ordered array of dense body and M-line attachments that are characteristic of mature muscle cells. During the formation of neuromuscular junctions at the larval stage, negatively regulates membrane protrusion from body wall muscles. The protein is Paralyzed arrest at two-fold protein 6 of Caenorhabditis elegans.